A 434-amino-acid chain; its full sequence is UDP-N-acetylmuramoyl-L-alanyl-D-glutamate--2,6-diaminopimelate ligase (434 aa).

Position 17 (Ser-17) interacts with UDP-N-acetyl-alpha-D-muramoyl-L-alanyl-D-glutamate. 68 to 74 (GTNGKTT) contributes to the ATP binding site. Residues 111-112 (TT), Ser-138, Gln-144, and Arg-146 each bind UDP-N-acetyl-alpha-D-muramoyl-L-alanyl-D-glutamate. Position 178 is an N6-carboxylysine (Lys-178). Meso-2,6-diaminopimelate is bound by residues Arg-326, 350–353 (DNPR), Gly-401, and Glu-405. Residues 350–353 (DNPR) carry the Meso-diaminopimelate recognition motif motif.

The protein belongs to the MurCDEF family. MurE subfamily. Mg(2+) serves as cofactor. In terms of processing, carboxylation is probably crucial for Mg(2+) binding and, consequently, for the gamma-phosphate positioning of ATP.

It is found in the cytoplasm. The enzyme catalyses UDP-N-acetyl-alpha-D-muramoyl-L-alanyl-D-glutamate + meso-2,6-diaminopimelate + ATP = UDP-N-acetyl-alpha-D-muramoyl-L-alanyl-gamma-D-glutamyl-meso-2,6-diaminopimelate + ADP + phosphate + H(+). It functions in the pathway cell wall biogenesis; peptidoglycan biosynthesis. Functionally, catalyzes the addition of meso-diaminopimelic acid to the nucleotide precursor UDP-N-acetylmuramoyl-L-alanyl-D-glutamate (UMAG) in the biosynthesis of bacterial cell-wall peptidoglycan. The sequence is that of UDP-N-acetylmuramoyl-L-alanyl-D-glutamate--2,6-diaminopimelate ligase from Wolinella succinogenes (strain ATCC 29543 / DSM 1740 / CCUG 13145 / JCM 31913 / LMG 7466 / NCTC 11488 / FDC 602W) (Vibrio succinogenes).